A 258-amino-acid polypeptide reads, in one-letter code: Imidazole glycerol phosphate synthase subunit HisF (258 aa).

Active-site residues include Asp11 and Asp130.

Belongs to the HisA/HisF family. Heterodimer of HisH and HisF.

It is found in the cytoplasm. It carries out the reaction 5-[(5-phospho-1-deoxy-D-ribulos-1-ylimino)methylamino]-1-(5-phospho-beta-D-ribosyl)imidazole-4-carboxamide + L-glutamine = D-erythro-1-(imidazol-4-yl)glycerol 3-phosphate + 5-amino-1-(5-phospho-beta-D-ribosyl)imidazole-4-carboxamide + L-glutamate + H(+). It functions in the pathway amino-acid biosynthesis; L-histidine biosynthesis; L-histidine from 5-phospho-alpha-D-ribose 1-diphosphate: step 5/9. Its function is as follows. IGPS catalyzes the conversion of PRFAR and glutamine to IGP, AICAR and glutamate. The HisF subunit catalyzes the cyclization activity that produces IGP and AICAR from PRFAR using the ammonia provided by the HisH subunit. This chain is Imidazole glycerol phosphate synthase subunit HisF, found in Lachnoclostridium phytofermentans (strain ATCC 700394 / DSM 18823 / ISDg) (Clostridium phytofermentans).